The following is a 541-amino-acid chain: Mesoderm induction early response protein 2 (541 aa).

At serine 11 the chain carries Phosphoserine. 2 disordered regions span residues 100–119 (DPIS…LPDM) and 131–186 (LSGE…EEDA). Polar residues predominate over residues 140–165 (QSSADDLTPSVTSHEASDLFHNQSGS). The region spanning 194–291 (KEIMVGPQFQ…EALRRLRFNV (98 aa)) is the ELM2 domain. One can recognise an SANT domain in the interval 296–348 (DGLCAWSEEECRNFEHGFRVHGKNFHLIQANKVRTRSVGECVEYYYLWKKSER). The segment at 364–440 (VSSGTTDTEQ…EPPAVPSLQQ (77 aa)) is disordered.

As to quaternary structure, part of a complex containing at least CDYL, MIER1, MIER2, HDAC1 and HDAC2.

The protein localises to the nucleus. In terms of biological role, transcriptional repressor. In Mus musculus (Mouse), this protein is Mesoderm induction early response protein 2 (Mier2).